A 400-amino-acid chain; its full sequence is tRNA-specific adenosine deaminase TAD3 (400 aa).

In terms of domain architecture, CMP/dCMP-type deaminase spans serine 250–phenylalanine 385. Zn(2+) is bound at residue histidine 257. The interval leucine 273–serine 320 is disordered. The span at asparagine 309–serine 320 shows a compositional bias: basic and acidic residues. Zn(2+) contacts are provided by cysteine 339 and cysteine 342.

The protein belongs to the cytidine and deoxycytidylate deaminase family. ADAT3 subfamily. Interacts with TAD2.

It is found in the nucleus. It localises to the cytoplasm. It catalyses the reaction adenosine(34) in tRNA + H2O + H(+) = inosine(34) in tRNA + NH4(+). In terms of biological role, involved in RNA editing. Catalyzes the specific deamination of adenosine-34 in several cytosolic tRNA species. Generates inosine at the wobble position of the anticodon loop. The sequence is that of tRNA-specific adenosine deaminase TAD3 from Arabidopsis thaliana (Mouse-ear cress).